We begin with the raw amino-acid sequence, 448 residues long: Tubulin beta chain (448 aa).

Residues Gln11, Glu69, Ser138, Gly142, Thr143, Gly144, Asn204, and Asn226 each coordinate GTP. Glu69 is a Mg(2+) binding site. Residues 425-448 (YQDASISEGEEEYLEEEEPLEHEE) are disordered. Residues 432-448 (EGEEEYLEEEEPLEHEE) show a composition bias toward acidic residues.

The protein belongs to the tubulin family. As to quaternary structure, dimer of alpha and beta chains. A typical microtubule is a hollow water-filled tube with an outer diameter of 25 nm and an inner diameter of 15 nM. Alpha-beta heterodimers associate head-to-tail to form protofilaments running lengthwise along the microtubule wall with the beta-tubulin subunit facing the microtubule plus end conferring a structural polarity. Microtubules usually have 13 protofilaments but different protofilament numbers can be found in some organisms and specialized cells. The cofactor is Mg(2+).

Its subcellular location is the cytoplasm. The protein localises to the cytoskeleton. Functionally, tubulin is the major constituent of microtubules, a cylinder consisting of laterally associated linear protofilaments composed of alpha- and beta-tubulin heterodimers. Microtubules grow by the addition of GTP-tubulin dimers to the microtubule end, where a stabilizing cap forms. Below the cap, tubulin dimers are in GDP-bound state, owing to GTPase activity of alpha-tubulin. The protein is Tubulin beta chain of Aspergillus flavus.